The following is a 463-amino-acid chain: uncharacterized protein (463 aa).

Positions 9–67 constitute a TRAM domain; the sequence is VLKKGQRFPLTIKRLGINGEGVGYFKRHVVFVPGALPGEEVVVEVTDVKPRFAEASIRK. The [4Fe-4S] cluster site is built by cysteine 80, cysteine 86, cysteine 89, and cysteine 169. Glutamine 293, tyrosine 322, aspartate 343, and aspartate 391 together coordinate S-adenosyl-L-methionine. Cysteine 418 serves as the catalytic Nucleophile.

This sequence belongs to the class I-like SAM-binding methyltransferase superfamily. RNA M5U methyltransferase family.

This is an uncharacterized protein from Halalkalibacterium halodurans (strain ATCC BAA-125 / DSM 18197 / FERM 7344 / JCM 9153 / C-125) (Bacillus halodurans).